Consider the following 372-residue polypeptide: Glutamate 5-kinase (372 aa).

ATP is bound at residue Lys9. Residues Ser49, Asp136, and Asn148 each contribute to the substrate site. Residues 168–169 (TD) and 210–216 (TGGMKSK) each bind ATP. The PUA domain maps to 276 to 360 (EGKVFIDDGA…PAIEVIHRDS (85 aa)).

The protein belongs to the glutamate 5-kinase family.

The protein localises to the cytoplasm. The enzyme catalyses L-glutamate + ATP = L-glutamyl 5-phosphate + ADP. It functions in the pathway amino-acid biosynthesis; L-proline biosynthesis; L-glutamate 5-semialdehyde from L-glutamate: step 1/2. Functionally, catalyzes the transfer of a phosphate group to glutamate to form L-glutamate 5-phosphate. This Oceanobacillus iheyensis (strain DSM 14371 / CIP 107618 / JCM 11309 / KCTC 3954 / HTE831) protein is Glutamate 5-kinase.